The chain runs to 250 residues: NAD(P)H-hydrate epimerase (250 aa).

One can recognise a YjeF N-terminal domain in the interval 14–238 (AAALDVELMS…SIAEKYGIQK (225 aa)). Residue 74 to 78 (NNGGD) coordinates (6S)-NADPHX. The K(+) site is built by asparagine 75 and aspartate 143. Residues 147-154 (GFSFHGTA), tyrosine 159, and aspartate 180 contribute to the (6S)-NADPHX site. Serine 183 is a K(+) binding site.

The protein belongs to the NnrE/AIBP family. K(+) is required as a cofactor.

The catalysed reaction is (6R)-NADHX = (6S)-NADHX. The enzyme catalyses (6R)-NADPHX = (6S)-NADPHX. Catalyzes the epimerization of the S- and R-forms of NAD(P)HX, a damaged form of NAD(P)H that is a result of enzymatic or heat-dependent hydration. This is a prerequisite for the S-specific NAD(P)H-hydrate dehydratase to allow the repair of both epimers of NAD(P)HX. This Thalassiosira pseudonana (Marine diatom) protein is NAD(P)H-hydrate epimerase.